Consider the following 182-residue polypeptide: Large ribosomal subunit protein uL5 (182 aa).

It belongs to the universal ribosomal protein uL5 family. As to quaternary structure, part of the 50S ribosomal subunit; part of the 5S rRNA/L5/L18/L25 subcomplex. Contacts the 5S rRNA and the P site tRNA. Forms a bridge to the 30S subunit in the 70S ribosome.

This is one of the proteins that bind and probably mediate the attachment of the 5S RNA into the large ribosomal subunit, where it forms part of the central protuberance. In the 70S ribosome it contacts protein S13 of the 30S subunit (bridge B1b), connecting the 2 subunits; this bridge is implicated in subunit movement. Contacts the P site tRNA; the 5S rRNA and some of its associated proteins might help stabilize positioning of ribosome-bound tRNAs. This is Large ribosomal subunit protein uL5 from Nostoc punctiforme (strain ATCC 29133 / PCC 73102).